A 1414-amino-acid polypeptide reads, in one-letter code: DNA-directed RNA polymerase subunit beta' (1414 aa).

Zn(2+)-binding residues include C70, C72, C85, and C88. Positions 460, 462, and 464 each coordinate Mg(2+). C814, C888, C895, and C898 together coordinate Zn(2+). The segment at 1378-1414 (EREAARQLANPFEDAPVTVGGEPEAPAADTPSDDSAE) is disordered.

It belongs to the RNA polymerase beta' chain family. The RNAP catalytic core consists of 2 alpha, 1 beta, 1 beta' and 1 omega subunit. When a sigma factor is associated with the core the holoenzyme is formed, which can initiate transcription. Mg(2+) is required as a cofactor. Zn(2+) serves as cofactor.

The catalysed reaction is RNA(n) + a ribonucleoside 5'-triphosphate = RNA(n+1) + diphosphate. DNA-dependent RNA polymerase catalyzes the transcription of DNA into RNA using the four ribonucleoside triphosphates as substrates. This Bordetella bronchiseptica (strain ATCC BAA-588 / NCTC 13252 / RB50) (Alcaligenes bronchisepticus) protein is DNA-directed RNA polymerase subunit beta'.